We begin with the raw amino-acid sequence, 198 residues long: MYYPEPIARLIESFSKLPGIGQKTATRLAFYTIGMEDQDVNEFAKNLLSAKRDLRFCSICGNLTESDPCAICTDPTRDRTTILVVEESKDVLAMEKIREYRGLYHVLHGTISPMNGISPDEINVKSLITRLMDSEVKEVIIATNATSDGEATAMYLARMIKPAGIKVTRLARGLAVGSDIEYADEVTLSKAVENRLEI.

The segment at 57–72 (CSICGNLTESDPCAIC) adopts a C4-type zinc-finger fold. The region spanning 80–175 (TTILVVEESK…KVTRLARGLA (96 aa)) is the Toprim domain.

This sequence belongs to the RecR family.

Its function is as follows. May play a role in DNA repair. It seems to be involved in an RecBC-independent recombinational process of DNA repair. It may act with RecF and RecO. In Lactococcus lactis subsp. cremoris (strain MG1363), this protein is Recombination protein RecR.